The following is a 684-amino-acid chain: DNA-directed RNA polymerase subunit beta' (684 aa).

The Zn(2+) site is built by Cys-69, Cys-71, Cys-87, and Cys-90. The Mg(2+) site is built by Asp-489, Asp-491, and Asp-493.

It belongs to the RNA polymerase beta' chain family. RpoC1 subfamily. In plastids the minimal PEP RNA polymerase catalytic core is composed of four subunits: alpha, beta, beta', and beta''. When a (nuclear-encoded) sigma factor is associated with the core the holoenzyme is formed, which can initiate transcription. Requires Mg(2+) as cofactor. The cofactor is Zn(2+).

The protein resides in the plastid. Its subcellular location is the chloroplast. It catalyses the reaction RNA(n) + a ribonucleoside 5'-triphosphate = RNA(n+1) + diphosphate. In terms of biological role, DNA-dependent RNA polymerase catalyzes the transcription of DNA into RNA using the four ribonucleoside triphosphates as substrates. The polypeptide is DNA-directed RNA polymerase subunit beta' (Morus indica (Mulberry)).